A 216-amino-acid polypeptide reads, in one-letter code: Cytidylate kinase (216 aa).

Position 7–15 (G7–T15) interacts with ATP.

It belongs to the cytidylate kinase family. Type 1 subfamily.

Its subcellular location is the cytoplasm. The catalysed reaction is CMP + ATP = CDP + ADP. It carries out the reaction dCMP + ATP = dCDP + ADP. The chain is Cytidylate kinase from Chlamydia caviae (strain ATCC VR-813 / DSM 19441 / 03DC25 / GPIC) (Chlamydophila caviae).